We begin with the raw amino-acid sequence, 157 residues long: uncharacterized protein (157 aa).

The 138-residue stretch at 9–146 folds into the N-acetyltransferase domain; it reads LLINYKTLDE…GDFYVWHPET (138 aa).

This is an uncharacterized protein from Bacillus anthracis (strain CDC 684 / NRRL 3495).